We begin with the raw amino-acid sequence, 364 residues long: Glycerophosphodiester phosphodiesterase (364 aa).

The first 18 residues, 1–18 (MKLKTLALSLLAAGVLAG), serve as a signal peptide directing secretion. Cys19 carries the N-palmitoyl cysteine lipid modification. Cys19 carries S-diacylglycerol cysteine lipidation. The region spanning 35 to 360 (KIIIAHRGAS…DFPDTGVEFL (326 aa)) is the GP-PDE domain. The active-site Proton acceptor is the His40. The Ca(2+) site is built by Glu67 and Asp69. Catalysis depends on His82, which acts as the Proton donor. Glu175 contacts Ca(2+).

The protein belongs to the glycerophosphoryl diester phosphodiesterase family. The cofactor is Ca(2+). In terms of processing, contains both ester- and amide-linked fatty acids.

It is found in the cell outer membrane. It carries out the reaction a sn-glycero-3-phosphodiester + H2O = an alcohol + sn-glycerol 3-phosphate + H(+). Functionally, glycerophosphodiester phosphodiesterase hydrolyzes glycerophosphodiesters into glycerol-3-phosphate (G3P) and the corresponding alcohol. Has a specific affinity for human immunoglobulin D myeloma protein. This chain is Glycerophosphodiester phosphodiesterase (glpQ), found in Haemophilus influenzae (strain ATCC 51907 / DSM 11121 / KW20 / Rd).